Here is a 278-residue protein sequence, read N- to C-terminus: Energy-coupling factor transporter ATP-binding protein EcfA (278 aa).

The ABC transporter domain maps to 4-239; sequence LETRDLKYSY…SETVRSANLR (236 aa). 37 to 44 contributes to the ATP binding site; sequence GPNGAGKS.

The protein belongs to the ABC transporter superfamily. Energy-coupling factor EcfA family. As to quaternary structure, forms a stable energy-coupling factor (ECF) transporter complex composed of 2 membrane-embedded substrate-binding proteins (S component), 2 ATP-binding proteins (A component) and 2 transmembrane proteins (T component).

Its subcellular location is the cell membrane. In terms of biological role, ATP-binding (A) component of a common energy-coupling factor (ECF) ABC-transporter complex. Unlike classic ABC transporters this ECF transporter provides the energy necessary to transport a number of different substrates. In Methanococcus maripaludis (strain DSM 14266 / JCM 13030 / NBRC 101832 / S2 / LL), this protein is Energy-coupling factor transporter ATP-binding protein EcfA.